Reading from the N-terminus, the 163-residue chain is Nucleotide-binding protein HSM_1099 (163 aa).

The protein belongs to the YajQ family.

Nucleotide-binding protein. This chain is Nucleotide-binding protein HSM_1099, found in Histophilus somni (strain 2336) (Haemophilus somnus).